The following is a 155-amino-acid chain: Small ribosomal subunit protein uS7c (155 aa).

This sequence belongs to the universal ribosomal protein uS7 family. Part of the 30S ribosomal subunit.

Its subcellular location is the plastid. The protein resides in the chloroplast. Its function is as follows. One of the primary rRNA binding proteins, it binds directly to 16S rRNA where it nucleates assembly of the head domain of the 30S subunit. This Silene latifolia (White campion) protein is Small ribosomal subunit protein uS7c (rps7).